The following is a 99-amino-acid chain: Large ribosomal subunit protein uL23 (99 aa).

The protein belongs to the universal ribosomal protein uL23 family. As to quaternary structure, part of the 50S ribosomal subunit. Contacts protein L29, and trigger factor when it is bound to the ribosome.

Functionally, one of the early assembly proteins it binds 23S rRNA. One of the proteins that surrounds the polypeptide exit tunnel on the outside of the ribosome. Forms the main docking site for trigger factor binding to the ribosome. The protein is Large ribosomal subunit protein uL23 of Xanthomonas campestris pv. campestris (strain B100).